A 557-amino-acid polypeptide reads, in one-letter code: Glutamine--tRNA ligase (557 aa).

A 'HIGH' region motif is present at residues 42-52 (PEPNGYLHIGH). Residues 43–45 (EPN) and 49–55 (HIGHAKS) contribute to the ATP site. Residues Asp-75 and Tyr-220 each contribute to the L-glutamine site. ATP-binding positions include Thr-239 and 270–271 (RL). Positions 277–281 (LTSKR) match the 'KMSKS' region motif.

It belongs to the class-I aminoacyl-tRNA synthetase family. Monomer.

It localises to the cytoplasm. It catalyses the reaction tRNA(Gln) + L-glutamine + ATP = L-glutaminyl-tRNA(Gln) + AMP + diphosphate. The protein is Glutamine--tRNA ligase of Haemophilus influenzae (strain ATCC 51907 / DSM 11121 / KW20 / Rd).